Consider the following 552-residue polypeptide: Chaperonin GroEL (552 aa).

Residues 30–33, K51, 87–91, G415, 480–482, and D496 each bind ATP; these read TLGP, DGTTT, and NAA.

It belongs to the chaperonin (HSP60) family. As to quaternary structure, forms a cylinder of 14 subunits composed of two heptameric rings stacked back-to-back. Interacts with the co-chaperonin GroES.

It is found in the cytoplasm. The enzyme catalyses ATP + H2O + a folded polypeptide = ADP + phosphate + an unfolded polypeptide.. Functionally, together with its co-chaperonin GroES, plays an essential role in assisting protein folding. The GroEL-GroES system forms a nano-cage that allows encapsulation of the non-native substrate proteins and provides a physical environment optimized to promote and accelerate protein folding. The protein is Chaperonin GroEL of Verminephrobacter eiseniae (strain EF01-2).